The following is a 478-amino-acid chain: Aspartyl/glutamyl-tRNA(Asn/Gln) amidotransferase subunit B 1 (478 aa).

Belongs to the GatB/GatE family. GatB subfamily. In terms of assembly, heterotrimer of A, B and C subunits.

It catalyses the reaction L-glutamyl-tRNA(Gln) + L-glutamine + ATP + H2O = L-glutaminyl-tRNA(Gln) + L-glutamate + ADP + phosphate + H(+). The catalysed reaction is L-aspartyl-tRNA(Asn) + L-glutamine + ATP + H2O = L-asparaginyl-tRNA(Asn) + L-glutamate + ADP + phosphate + 2 H(+). Allows the formation of correctly charged Asn-tRNA(Asn) or Gln-tRNA(Gln) through the transamidation of misacylated Asp-tRNA(Asn) or Glu-tRNA(Gln) in organisms which lack either or both of asparaginyl-tRNA or glutaminyl-tRNA synthetases. The reaction takes place in the presence of glutamine and ATP through an activated phospho-Asp-tRNA(Asn) or phospho-Glu-tRNA(Gln). The protein is Aspartyl/glutamyl-tRNA(Asn/Gln) amidotransferase subunit B 1 of Syntrophus aciditrophicus (strain SB).